The primary structure comprises 102 residues: uncharacterized protein (102 aa).

This is an uncharacterized protein from Homo sapiens (Human).